A 358-amino-acid polypeptide reads, in one-letter code: UDP-N-acetylglucosamine--N-acetylmuramyl-(pentapeptide) pyrophosphoryl-undecaprenol N-acetylglucosamine transferase (358 aa).

UDP-N-acetyl-alpha-D-glucosamine is bound by residues 11-13 (TAG), Asn125, Arg162, Ser196, and Gln288.

The protein belongs to the glycosyltransferase 28 family. MurG subfamily.

The protein resides in the cell membrane. The catalysed reaction is di-trans,octa-cis-undecaprenyl diphospho-N-acetyl-alpha-D-muramoyl-L-alanyl-D-glutamyl-meso-2,6-diaminopimeloyl-D-alanyl-D-alanine + UDP-N-acetyl-alpha-D-glucosamine = di-trans,octa-cis-undecaprenyl diphospho-[N-acetyl-alpha-D-glucosaminyl-(1-&gt;4)]-N-acetyl-alpha-D-muramoyl-L-alanyl-D-glutamyl-meso-2,6-diaminopimeloyl-D-alanyl-D-alanine + UDP + H(+). Its pathway is cell wall biogenesis; peptidoglycan biosynthesis. In terms of biological role, cell wall formation. Catalyzes the transfer of a GlcNAc subunit on undecaprenyl-pyrophosphoryl-MurNAc-pentapeptide (lipid intermediate I) to form undecaprenyl-pyrophosphoryl-MurNAc-(pentapeptide)GlcNAc (lipid intermediate II). This is UDP-N-acetylglucosamine--N-acetylmuramyl-(pentapeptide) pyrophosphoryl-undecaprenol N-acetylglucosamine transferase from Leifsonia xyli subsp. xyli (strain CTCB07).